We begin with the raw amino-acid sequence, 204 residues long: Elongation factor Ts (204 aa).

The involved in Mg(2+) ion dislocation from EF-Tu stretch occupies residues 87–90 (TDFV).

The protein belongs to the EF-Ts family.

It is found in the cytoplasm. In terms of biological role, associates with the EF-Tu.GDP complex and induces the exchange of GDP to GTP. It remains bound to the aminoacyl-tRNA.EF-Tu.GTP complex up to the GTP hydrolysis stage on the ribosome. This is Elongation factor Ts from Frankia alni (strain DSM 45986 / CECT 9034 / ACN14a).